The chain runs to 464 residues: Properdin (464 aa).

The signal sequence occupies residues 1 to 22 (MPAEMQAPQWLLLLLVILPATG). TSP type-1 domains lie at 24 to 72 (DPVL…QACR), 73 to 130 (SPQW…PCCP), 132 to 187 (MGGW…KTCP), 189 to 251 (HGAW…PPCP), 253 to 309 (AGGW…VPCP), 311 to 372 (NGEW…HNCI), and 374 to 457 (KGSW…PVCK). Intrachain disulfides connect Cys-28–Cys-52, Cys-39–Cys-68, and Cys-53–Cys-71. C-linked (Man) tryptophan glycosylation is found at Trp-79 and Trp-82. 7 disulfide bridges follow: Cys-85/Cys-123, Cys-89/Cys-129, Cys-100/Cys-107, Cys-128/Cys-166, Cys-144/Cys-180, Cys-148/Cys-186, and Cys-159/Cys-170. C-linked (Man) tryptophan glycosylation is found at Trp-135, Trp-138, and Trp-141. Thr-147 carries O-linked (Fuc...) threonine glycosylation. Trp-192, Trp-195, and Trp-198 each carry a C-linked (Man) tryptophan glycan. 3 cysteine pairs are disulfide-bonded: Cys-201/Cys-244, Cys-205/Cys-250, and Cys-220/Cys-234. O-linked (Fuc...) serine glycosylation is present at Ser-204. 2 C-linked (Man) tryptophan glycosylation sites follow: Trp-256 and Trp-259. Intrachain disulfides connect Cys-265-Cys-302, Cys-269-Cys-308, and Cys-280-Cys-292. O-linked (Fuc...) threonine glycosylation occurs at Thr-268. C-linked (Man) tryptophan glycans are attached at residues Trp-317 and Trp-320. Disulfide bonds link Cys-323–Cys-365, Cys-332–Cys-371, and Cys-345–Cys-355. The interval 346-354 (GGRKFNGKP) is interaction with Complement C3 beta chain. C-linked (Man) tryptophan glycosylation is found at Trp-377, Trp-380, and Trp-383. Disulfide bonds link Cys-386–Cys-450, Cys-390–Cys-456, and Cys-402–Cys-434. Residue Asn-423 is glycosylated (N-linked (GlcNAc...) asparagine).

In terms of assembly, in plasma, properdin exists as dimers, trimers or tetramers in the relative proportions of 26:54:20. Interacts with the pro-C3-convertase enzyme complex (C3b-Bb) comprised of Complement C3 beta chain (C3b) and the Complement factor B Bb fragment (Bb), where it binds (via its TSP type-1 5 domain) with C3b and Bb. This interaction stabilizes the complex and allows it to become the active C3-convertase enzyme complex (C3b-Bb-FP). Interacts with C3b. Interacts with CFB.

It is found in the secreted. Functionally, a positive regulator of the alternate pathway of complement. It binds to and stabilizes the C3- and C5-convertase enzyme complexes. Inhibits CFI-CFH mediated degradation of Inhibits CFI-CFH mediated degradation of Complement C3 beta chain (C3b). This chain is Properdin (Cfp), found in Mus musculus (Mouse).